Reading from the N-terminus, the 776-residue chain is Disintegrin and metalloproteinase domain-containing protein 7 (776 aa).

Positions 1 to 23 (MLPGCIFLMILLILQVKEKVILG) are cleaved as a signal peptide. Positions 24–176 (VEGQQLVYPK…NYSCTELNFT (153 aa)) are excised as a propeptide. At 26-669 (GQQLVYPKKL…WEETLNVTNV (644 aa)) the chain is on the extracellular side. N-linked (GlcNAc...) asparagine glycans are attached at residues N84, N167, and N174. The Peptidase M12B domain maps to 199–394 (KYIELFIVAD…YKPTCMLNIP (196 aa)). 4 cysteine pairs are disulfide-bonded: C310/C389, C350/C373, C352/C357, and C460/C480. The 87-residue stretch at 402 to 488 (FQFCGNKKLD…ACPKDQFRVN (87 aa)) folds into the Disintegrin domain. Residues N584, N629, and N665 are each glycosylated (N-linked (GlcNAc...) asparagine). Residues 670–690 (AILIVVLVLVIVGIGVLILLI) traverse the membrane as a helical segment. The Cytoplasmic segment spans residues 691 to 776 (RYQKCIKLKQ…GIADPNQSAK (86 aa)). Residues 757–776 (TLKPASKDSRGIADPNQSAK) are disordered.

In terms of assembly, interacts with ITM2B in sperm; the interaction increases following capacitation. Interacts with HSPA5 and CANX.

It localises to the membrane. Functionally, required for normal male fertility via maintenance of epithelial cell morphology in the caput epididymis and subsequently correct epididymis lumen structure required for sperm development. Plays a role in sperm motility, flagella morphology and tyrosine phosphorylation during sperm capacitance. Plays a role in normal expression levels of HSPA5, ITM2B and ADAM2 in sperm both prior to and post-capacitation. This is a non catalytic metalloprotease-like protein. This Macaca fascicularis (Crab-eating macaque) protein is Disintegrin and metalloproteinase domain-containing protein 7 (ADAM7).